Here is a 545-residue protein sequence, read N- to C-terminus: Chaperonin GroEL 2 (545 aa).

Residues 29 to 32, 86 to 90, Gly413, 479 to 481, and Asp495 contribute to the ATP site; these read TLGP, DGTTT, and NAA.

Belongs to the chaperonin (HSP60) family. In terms of assembly, forms a cylinder of 14 subunits composed of two heptameric rings stacked back-to-back. Interacts with the co-chaperonin GroES.

The protein resides in the cytoplasm. The catalysed reaction is ATP + H2O + a folded polypeptide = ADP + phosphate + an unfolded polypeptide.. Functionally, together with its co-chaperonin GroES, plays an essential role in assisting protein folding. The GroEL-GroES system forms a nano-cage that allows encapsulation of the non-native substrate proteins and provides a physical environment optimized to promote and accelerate protein folding. The polypeptide is Chaperonin GroEL 2 (Prochlorococcus marinus (strain MIT 9301)).